The sequence spans 473 residues: Pre-mRNA-splicing factor prp5 (473 aa).

7 WD repeats span residues 161-191 (GHLG…KIWD), 203-233 (GHIA…KCWD), 245-275 (GHLS…RVWD), 287-317 (GHKS…RLWD), 329-358 (HHKK…KHWK), 370-399 (GHNA…CFWD), and 419-449 (DSEA…KIYK).

It belongs to the WD repeat PRL1/PRL2 family. In terms of assembly, belongs to the 40S cdc5-associated complex (or cwf complex), a spliceosome sub-complex reminiscent of a late-stage spliceosome composed of the U2, U5 and U6 snRNAs and at least brr2, cdc5, cwf2/prp3, cwf3/syf1, cwf4/syf3, cwf5/ecm2, spp42/cwf6, cwf7/spf27, cwf8, cwf9, cwf10, cwf11, cwf12, prp45/cwf13, cwf14, cwf15, cwf16, cwf17, cwf18, cwf19, cwf20, cwf21, cwf22, cwf23, cwf24, cwf25, cwf26, cyp7/cwf27, cwf28, cwf29/ist3, lea1, msl1, prp5/cwf1, prp10, prp12/sap130, prp17, prp22, sap61, sap62, sap114, sap145, slu7, smb1, smd1, smd3, smf1, smg1 and syf2.

It is found in the nucleus. Functionally, required for both cell cycle progression at G2/M and pre-mRNA splicing. Interacts genetically with the PRP4 kinase. This chain is Pre-mRNA-splicing factor prp5 (prp5), found in Schizosaccharomyces pombe (strain 972 / ATCC 24843) (Fission yeast).